The sequence spans 427 residues: Cysteate synthase (427 aa).

K104 is modified (N6-(pyridoxal phosphate)lysine). Residues N130 and T382 each contribute to the pyridoxal 5'-phosphate site.

Belongs to the threonine synthase family. Cysteate synthase subfamily. In terms of assembly, homotrimer. Pyridoxal 5'-phosphate serves as cofactor.

The catalysed reaction is O-phospho-L-serine + sulfite + H(+) = L-cysteate + phosphate. It functions in the pathway cofactor biosynthesis; coenzyme M biosynthesis. Specifically catalyzes the beta-elimination of phosphate from L-phosphoserine and the beta-addition of sulfite to the dehydroalanine intermediate to produce L-cysteate. The chain is Cysteate synthase from Methanocella paludicola (strain DSM 17711 / JCM 13418 / NBRC 101707 / SANAE).